A 393-amino-acid polypeptide reads, in one-letter code: S-adenosylmethionine synthase (393 aa).

A Mg(2+)-binding site is contributed by Glu-9. His-15 contributes to the ATP binding site. Glu-43 contacts K(+). L-methionine contacts are provided by Glu-56 and Gln-99. ATP contacts are provided by residues 167 to 169, 235 to 238, Asp-246, 252 to 253, Ala-269, Lys-273, and Lys-277; these read DGK, SGRF, and RK. Asp-246 serves as a coordination point for L-methionine. Lys-277 lines the L-methionine pocket.

Belongs to the AdoMet synthase family. Homotetramer. Mn(2+) serves as cofactor. Requires Mg(2+) as cofactor. The cofactor is Co(2+). K(+) is required as a cofactor.

Its subcellular location is the cytoplasm. The enzyme catalyses L-methionine + ATP + H2O = S-adenosyl-L-methionine + phosphate + diphosphate. It participates in amino-acid biosynthesis; S-adenosyl-L-methionine biosynthesis; S-adenosyl-L-methionine from L-methionine: step 1/1. Functionally, catalyzes the formation of S-adenosylmethionine from methionine and ATP. The reaction comprises two steps that are both catalyzed by the same enzyme: formation of S-adenosylmethionine (AdoMet) and triphosphate, and subsequent hydrolysis of the triphosphate. The polypeptide is S-adenosylmethionine synthase (SAM) (Camellia sinensis (Tea plant)).